Consider the following 342-residue polypeptide: Heat-inducible transcription repressor HrcA (342 aa).

The protein belongs to the HrcA family.

In terms of biological role, negative regulator of class I heat shock genes (grpE-dnaK-dnaJ and groELS operons). Prevents heat-shock induction of these operons. In Oceanobacillus iheyensis (strain DSM 14371 / CIP 107618 / JCM 11309 / KCTC 3954 / HTE831), this protein is Heat-inducible transcription repressor HrcA.